A 54-amino-acid chain; its full sequence is Ribulose bisphosphate carboxylase large chain (54 aa).

A propeptide spanning residues 1 to 2 is cleaved from the precursor; it reads MS. The residue at position 3 (Pro3) is an N-acetylproline. At Lys14 the chain carries N6,N6,N6-trimethyllysine.

The protein belongs to the RuBisCO large chain family. Type I subfamily. In terms of assembly, heterohexadecamer of 8 large chains and 8 small chains.

The protein resides in the plastid. It is found in the chloroplast. The catalysed reaction is 2 (2R)-3-phosphoglycerate + 2 H(+) = D-ribulose 1,5-bisphosphate + CO2 + H2O. The enzyme catalyses D-ribulose 1,5-bisphosphate + O2 = 2-phosphoglycolate + (2R)-3-phosphoglycerate + 2 H(+). In terms of biological role, ruBisCO catalyzes two reactions: the carboxylation of D-ribulose 1,5-bisphosphate, the primary event in carbon dioxide fixation, as well as the oxidative fragmentation of the pentose substrate in the photorespiration process. Both reactions occur simultaneously and in competition at the same active site. This is Ribulose bisphosphate carboxylase large chain (rbcL) from Rhamnus cathartica (Common buckthorn).